A 304-amino-acid polypeptide reads, in one-letter code: Rhomboid-like protein 19 (304 aa).

6 consecutive transmembrane segments (helical) span residues 23-43, 58-78, 93-113, 120-140, 158-175, and 179-198; these read LVVG…LALI, GYFE…LFMG, FIFV…IALY, VYLY…LVGI, WLPS…FFTL, and AYLP…LRYL. A disordered region spans residues 247 to 304; sequence SEDHDYSTSGAPLPGSDSAEASRRRERGARALEERLGTERLVPARNKDELQSDGLDNV. The span at 266 to 284 shows a compositional bias: basic and acidic residues; that stretch reads EASRRRERGARALEERLGT.

Belongs to the peptidase S54 family.

It localises to the membrane. Functionally, probable rhomboid-type serine protease that catalyzes intramembrane proteolysis. The polypeptide is Rhomboid-like protein 19 (Arabidopsis thaliana (Mouse-ear cress)).